A 446-amino-acid polypeptide reads, in one-letter code: MSRYFGTDGIRGRVGQGLISADFVLRLGNALGRVLAQGRDTRPMVLIGKDTRISGYMFESALEAGLVAAGADVQLIGPMPTPAIAFLTNTLRADAGVVISASHNPHDDNGIKFFSAMGEKLDDATEAAIEAAIEAPFLTVDSEYLGKVKRTRDAIGRYIEFSKASVPRGFTLRGLKLVLDCAHGATYHIAPMLFRELGAELVTIGVDPDGLNINAGVGSTHLETLAATVRESGADLGIAFDGDGDRVLMTDAQGRTVDGDDLLYVLARAWRASGRLKGTVVGTLMSNYGLEQALGTLGIPFIRARVGDRYVHQALVESGGVLGGEASGHLLCLDRATTGDGIVSALQVLEVLRHEGLTLSQALLGLHKVPQKTVNVCWSGPARAAVEMPEVRQALVEAQAAVQGRGRVFLRPSGTEPVVRITVEADDVVLMQQTLDRLADVVRDAA.

Catalysis depends on S102, which acts as the Phosphoserine intermediate. Residues S102, D241, D243, and D245 each contribute to the Mg(2+) site. S102 carries the phosphoserine modification.

Belongs to the phosphohexose mutase family. It depends on Mg(2+) as a cofactor. Post-translationally, activated by phosphorylation.

It catalyses the reaction alpha-D-glucosamine 1-phosphate = D-glucosamine 6-phosphate. In terms of biological role, catalyzes the conversion of glucosamine-6-phosphate to glucosamine-1-phosphate. The protein is Phosphoglucosamine mutase of Xylella fastidiosa (strain M23).